The chain runs to 554 residues: Glucose-6-phosphate isomerase (554 aa).

E359 serves as the catalytic Proton donor. Active-site residues include H390 and K518.

It belongs to the GPI family.

The protein localises to the cytoplasm. It carries out the reaction alpha-D-glucose 6-phosphate = beta-D-fructose 6-phosphate. It functions in the pathway carbohydrate biosynthesis; gluconeogenesis. Its pathway is carbohydrate degradation; glycolysis; D-glyceraldehyde 3-phosphate and glycerone phosphate from D-glucose: step 2/4. Catalyzes the reversible isomerization of glucose-6-phosphate to fructose-6-phosphate. This Pseudomonas aeruginosa (strain LESB58) protein is Glucose-6-phosphate isomerase.